The chain runs to 364 residues: Tyrosine--tRNA ligase (364 aa).

The L-tyrosine site is built by Y41, Y167, Q171, D174, and Q189. The short motif at 238–242 is the 'KMSKS' region element; the sequence is KMSKS. K241 serves as a coordination point for ATP.

It belongs to the class-I aminoacyl-tRNA synthetase family. TyrS type 4 subfamily. In terms of assembly, homodimer.

It is found in the cytoplasm. It carries out the reaction tRNA(Tyr) + L-tyrosine + ATP = L-tyrosyl-tRNA(Tyr) + AMP + diphosphate + H(+). Functionally, catalyzes the attachment of tyrosine to tRNA(Tyr) in a two-step reaction: tyrosine is first activated by ATP to form Tyr-AMP and then transferred to the acceptor end of tRNA(Tyr). The chain is Tyrosine--tRNA ligase from Sulfurisphaera tokodaii (strain DSM 16993 / JCM 10545 / NBRC 100140 / 7) (Sulfolobus tokodaii).